We begin with the raw amino-acid sequence, 479 residues long: Putative F-box/LRR-repeat protein At1g56400 (479 aa).

Residues 12–60 (QDRLSNLPDVLLIMIISCLSFKECIRTSVLAKRWRYLCRETRNISFKET) enclose the F-box domain. LRR repeat units follow at residues 99–129 (YFSIPSDFLAAVESLIEFAVSRQVKNLVLDF), 139–167 (CASRYDYVCVQLPVCVYSLTTLESLKIYS), 186–211 (IGWIKLTDVESLLLNSPTLKSLSINY), 228–254 (VFESCDFSSFMVCCFDLPNVEIFKYSG), 287–312 (RTKLEGSVLSAFLNNLRGARTLSVCP), 342–367 (LHVMEFKGIKLLLDNCPNLETLTFDI), and 419–446 (LKFLIQSGRGRWPGREHGPMLERVELYM).

This is Putative F-box/LRR-repeat protein At1g56400 from Arabidopsis thaliana (Mouse-ear cress).